We begin with the raw amino-acid sequence, 30 residues long: Cyclotide cter-G (30 aa).

A cross-link (cyclopeptide (Gly-Asn)) is located at residues 1-30 (GLPCGESCVFIPCITTVVGCSCKNKVCYNN). 3 disulfides stabilise this stretch: Cys-4-Cys-20, Cys-8-Cys-22, and Cys-13-Cys-27.

Post-translationally, contains 3 disulfide bonds. In terms of processing, this is a cyclic peptide.

Functionally, probably participates in a plant defense mechanism. In Clitoria ternatea (Butterfly pea), this protein is Cyclotide cter-G.